Consider the following 275-residue polypeptide: MTTDSLIPVVVNGAAGKMGREVVKAVAQAEDMMLVGAVDYNPNYRGQDVGEVAGCGALEVPIVDDLQSILVLATQEKIQGVMVDFTHPDSVYENVRSAIAYGVRPVVGTTGLTEEQLKDLADFADKASTGCLVIPNFSIGMVLLQQAAVQASQYFDHVEIIELHHNQKADAPSGTAIKTAQMLSGLGKTYNPPMVKETETIAGAKGALVDDNIRIHSVRLPGLIAHQEVIFGAKGEIYTLRHDTSDRSCYMAGVLLSIRKVTQLQSLVYGLEKIL.

Residues 13-18 and 108-110 contribute to the NAD(+) site; these read GAAGKM and GTT. Residue histidine 164 is the Proton donor/acceptor of the active site. Position 165 (histidine 165) interacts with (S)-2,3,4,5-tetrahydrodipicolinate. The Proton donor role is filled by lysine 168. A (S)-2,3,4,5-tetrahydrodipicolinate-binding site is contributed by 174 to 175; that stretch reads GT.

It belongs to the DapB family.

Its subcellular location is the cytoplasm. It carries out the reaction (S)-2,3,4,5-tetrahydrodipicolinate + NAD(+) + H2O = (2S,4S)-4-hydroxy-2,3,4,5-tetrahydrodipicolinate + NADH + H(+). It catalyses the reaction (S)-2,3,4,5-tetrahydrodipicolinate + NADP(+) + H2O = (2S,4S)-4-hydroxy-2,3,4,5-tetrahydrodipicolinate + NADPH + H(+). The protein operates within amino-acid biosynthesis; L-lysine biosynthesis via DAP pathway; (S)-tetrahydrodipicolinate from L-aspartate: step 4/4. In terms of biological role, catalyzes the conversion of 4-hydroxy-tetrahydrodipicolinate (HTPA) to tetrahydrodipicolinate. The polypeptide is 4-hydroxy-tetrahydrodipicolinate reductase (Rippkaea orientalis (strain PCC 8801 / RF-1) (Cyanothece sp. (strain PCC 8801))).